We begin with the raw amino-acid sequence, 189 residues long: Peptidyl-tRNA hydrolase (189 aa).

Tyrosine 15 contacts tRNA. The active-site Proton acceptor is the histidine 20. Residues phenylalanine 66, asparagine 68, and asparagine 114 each contribute to the tRNA site.

It belongs to the PTH family. Monomer.

It localises to the cytoplasm. The catalysed reaction is an N-acyl-L-alpha-aminoacyl-tRNA + H2O = an N-acyl-L-amino acid + a tRNA + H(+). In terms of biological role, hydrolyzes ribosome-free peptidyl-tRNAs (with 1 or more amino acids incorporated), which drop off the ribosome during protein synthesis, or as a result of ribosome stalling. Functionally, catalyzes the release of premature peptidyl moieties from peptidyl-tRNA molecules trapped in stalled 50S ribosomal subunits, and thus maintains levels of free tRNAs and 50S ribosomes. The polypeptide is Peptidyl-tRNA hydrolase (Streptococcus pneumoniae serotype 2 (strain D39 / NCTC 7466)).